A 439-amino-acid chain; its full sequence is uncharacterized protein (439 aa).

28–35 is an ATP binding site; it reads GRRRIGKT.

This is an uncharacterized protein from Methanocaldococcus jannaschii (strain ATCC 43067 / DSM 2661 / JAL-1 / JCM 10045 / NBRC 100440) (Methanococcus jannaschii).